The sequence spans 333 residues: Mevalonate kinase (333 aa).

109 to 119 (PVGAGLGSSAA) is an ATP binding site. The active-site Proton acceptor is aspartate 160.

The protein belongs to the GHMP kinase family. Mevalonate kinase subfamily. Homodimer. Mg(2+) is required as a cofactor.

Its subcellular location is the cytoplasm. The catalysed reaction is (R)-mevalonate + ATP = (R)-5-phosphomevalonate + ADP + H(+). It participates in isoprenoid biosynthesis; isopentenyl diphosphate biosynthesis via mevalonate pathway; isopentenyl diphosphate from (R)-mevalonate: step 1/3. Its function is as follows. Catalyzes the phosphorylation of (R)-mevalonate (MVA) to (R)-mevalonate 5-phosphate (MVAP). Functions in the mevalonate (MVA) pathway leading to isopentenyl diphosphate (IPP), a key precursor for the biosynthesis of isoprenoid compounds such as archaeal membrane lipids. This chain is Mevalonate kinase, found in Thermococcus sibiricus (strain DSM 12597 / MM 739).